Consider the following 1302-residue polypeptide: 1-phosphatidylinositol 4,5-bisphosphate phosphodiesterase gamma-1 (1302 aa).

The residue at position 2 (Ala-2) is an N-acetylalanine. The PH 1 domain maps to 27 to 142 (RSLEVGTVMT…WIKGLTWLME (116 aa)). An EF-hand domain is found at 152 to 187 (QIERWLRKQFYSVDRNREDRISAKDLKNMLSQVNYR). Residues Asp-165, Asn-167, Glu-169, Arg-171, and Asp-176 each contribute to the Ca(2+) site. The 145-residue stretch at 320-464 (DTMNNPLSHY…LRRKILIKHK (145 aa)) folds into the PI-PLC X-box domain. Residues His-335 and His-380 contribute to the active site. In terms of domain architecture, PH 2; first part spans 489–523 (SIKNGILYLEDPVNHEWYPHYFVLTSSKIYYSEET). Position 506 is a phosphotyrosine (Tyr-506). The disordered stretch occupies residues 522 to 545 (ETSSDQGNEDEEEPKEASSSTELH). SH2 domains are found at residues 550 to 657 (WFHG…SEPV) and 668 to 756 (WYHA…RYPI). Tyr-771 carries the phosphotyrosine; by SYK modification. Tyr-775 carries the phosphotyrosine modification. Tyr-783 bears the Phosphotyrosine; by ITK, SYK and TXK mark. The region spanning 791–851 (TFKCAVKALF…PSNYVEEMIN (61 aa)) is the SH3 domain. A PH 2; second part domain is found at 895-931 (FVFSISMPSVAQWSLDVAADSQEELQDWVKKIREVAQ). One can recognise a PI-PLC Y-box domain in the interval 953 to 1070 (LSELVVYCRP…GYVLQPSTMR (118 aa)). Phosphotyrosine is present on Tyr-977. The C2 domain occupies 1071–1194 (DEAFDPFDKS…TGYRAVPLKN (124 aa)). Phosphoserine occurs at positions 1221, 1227, 1233, and 1248. Tyr-1253 carries the post-translational modification Phosphotyrosine. Residue Ser-1263 is modified to Phosphoserine.

As to quaternary structure, interacts (via SH2 domain) with FGFR1, FGFR2, FGFR3 and FGFR4 (phosphorylated). Interacts with RALGPS1. Interacts (via SH2 domains) with VIL1 (phosphorylated at C-terminus tyrosine phosphorylation sites). Interacts (via SH2 domain) with RET. Interacts with AGAP2 via its SH3 domain. Interacts with LAT (phosphorylated) upon TCR activation. Interacts (via SH3 domain) with the Pro-rich domain of TNK1. Associates with BLNK, VAV1, GRB2 and NCK1 in a B-cell antigen receptor-dependent fashion. Interacts with CBLB in activated T-cells; which inhibits phosphorylation. Interacts with SHB. Interacts (via SH3 domain) with the Arg/Gly-rich-flanked Pro-rich domains of KHDRBS1/SAM68. This interaction is selectively regulated by arginine methylation of KHDRBS1/SAM68. Interacts with INPP5D/SHIP1, THEMIS and CLNK. Interacts with FLT4 and KIT. Interacts with AXL. Interacts with SYK; activates PLCG1. Interacts with FLT1 (tyrosine-phosphorylated). Interacts (via SH2 domain) with PDGFRA and PDGFRB (tyrosine phosphorylated). Interacts with PIP5K1C. Interacts with NTRK1 and NTRK2 (phosphorylated upon ligand-binding). Interacts with TESPA1. Interacts with GRB2, LAT and THEMIS upon TCR activation in thymocytes; the association is weaker in the absence of TESPA1. Interacts (via C-terminal proline-rich domain (PRD)) with PLCG1 (via SH3 domain); this interaction leads to guanine nucleotide exchange from PlCG1 to DNM1 and enhances DNM1-dependent endocytosis. Ca(2+) is required as a cofactor. In terms of processing, tyrosine phosphorylated in response to signaling via activated FLT3, KIT and PDGFRA. Tyrosine phosphorylated by activated FGFR1, FGFR2, FGFR3 and FGFR4. Tyrosine phosphorylated by activated FLT1 and KDR. Tyrosine phosphorylated by activated PDGFRB. The receptor-mediated activation of PLCG1 involves its phosphorylation by tyrosine kinases in response to ligation of a variety of growth factor receptors and immune system receptors. For instance, SYK phosphorylates and activates PLCG1 in response to ligation of the B-cell receptor. Phosphorylated by ITK and TXK on Tyr-783 upon TCR activation in T-cells. May be dephosphorylated by PTPRJ. Ubiquitinated by CBLB in activated T-cells.

It localises to the cell projection. The protein resides in the lamellipodium. It is found in the ruffle. It catalyses the reaction a 1,2-diacyl-sn-glycero-3-phospho-(1D-myo-inositol-4,5-bisphosphate) + H2O = 1D-myo-inositol 1,4,5-trisphosphate + a 1,2-diacyl-sn-glycerol + H(+). The enzyme catalyses a 1,2-diacyl-sn-glycero-3-phospho-(1D-myo-inositol) + H2O = 1D-myo-inositol 1-phosphate + a 1,2-diacyl-sn-glycerol + H(+). Its activity is regulated as follows. Activated by phosphorylation on tyrosine residues. In terms of biological role, mediates the production of the second messenger molecules diacylglycerol (DAG) and inositol 1,4,5-trisphosphate (IP3). Plays an important role in the regulation of intracellular signaling cascades. Becomes activated in response to ligand-mediated activation of receptor-type tyrosine kinases, such as PDGFRA, PDGFRB, EGFR, FGFR1, FGFR2, FGFR3 and FGFR4. Plays a role in actin reorganization and cell migration. Guanine nucleotide exchange factor that binds the GTPase DNM1 and catalyzes the dissociation of GDP, allowing a GTP molecule to bind in its place, therefore enhancing DNM1-dependent endocytosis. The protein is 1-phosphatidylinositol 4,5-bisphosphate phosphodiesterase gamma-1 of Mus musculus (Mouse).